Consider the following 260-residue polypeptide: Proteasome subunit alpha (260 aa).

The disordered stretch occupies residues 241–260 (VEAEEVPEKEEDYSELDSNY). Positions 242–260 (EAEEVPEKEEDYSELDSNY) are enriched in acidic residues.

This sequence belongs to the peptidase T1A family. The 20S proteasome core is composed of 14 alpha and 14 beta subunits that assemble into four stacked heptameric rings, resulting in a barrel-shaped structure. The two inner rings, each composed of seven catalytic beta subunits, are sandwiched by two outer rings, each composed of seven alpha subunits. The catalytic chamber with the active sites is on the inside of the barrel. Has a gated structure, the ends of the cylinder being occluded by the N-termini of the alpha-subunits. Is capped at one or both ends by the proteasome regulatory ATPase, PAN.

It localises to the cytoplasm. Its activity is regulated as follows. The formation of the proteasomal ATPase PAN-20S proteasome complex, via the docking of the C-termini of PAN into the intersubunit pockets in the alpha-rings, triggers opening of the gate for substrate entry. Interconversion between the open-gate and close-gate conformations leads to a dynamic regulation of the 20S proteasome proteolysis activity. In terms of biological role, component of the proteasome core, a large protease complex with broad specificity involved in protein degradation. This chain is Proteasome subunit alpha, found in Thermococcus sibiricus (strain DSM 12597 / MM 739).